The chain runs to 284 residues: UPF0354 protein SERP1303 (284 aa).

The protein belongs to the UPF0354 family.

This is UPF0354 protein SERP1303 from Staphylococcus epidermidis (strain ATCC 35984 / DSM 28319 / BCRC 17069 / CCUG 31568 / BM 3577 / RP62A).